We begin with the raw amino-acid sequence, 89 residues long: Small ribosomal subunit protein uS15 (89 aa).

The protein belongs to the universal ribosomal protein uS15 family. Part of the 30S ribosomal subunit. Forms a bridge to the 50S subunit in the 70S ribosome, contacting the 23S rRNA.

Functionally, one of the primary rRNA binding proteins, it binds directly to 16S rRNA where it helps nucleate assembly of the platform of the 30S subunit by binding and bridging several RNA helices of the 16S rRNA. Forms an intersubunit bridge (bridge B4) with the 23S rRNA of the 50S subunit in the ribosome. The protein is Small ribosomal subunit protein uS15 of Prochlorococcus marinus (strain MIT 9215).